Consider the following 207-residue polypeptide: N-(5'-phosphoribosyl)anthranilate isomerase (207 aa).

The protein belongs to the TrpF family.

The catalysed reaction is N-(5-phospho-beta-D-ribosyl)anthranilate = 1-(2-carboxyphenylamino)-1-deoxy-D-ribulose 5-phosphate. It participates in amino-acid biosynthesis; L-tryptophan biosynthesis; L-tryptophan from chorismate: step 3/5. This is N-(5'-phosphoribosyl)anthranilate isomerase from Petrotoga mobilis (strain DSM 10674 / SJ95).